We begin with the raw amino-acid sequence, 756 residues long: Nucleomorphin (756 aa).

Positions Met1–Ser10 are enriched in polar residues. A disordered region spans residues Met1 to Ser113. Composition is skewed to low complexity over residues Asn16–Ser66 and Asn75–Asn94. Positions Gly95–Ser113 are enriched in polar residues. Residues Leu124–Val216 form the BRCT domain. 4 disordered regions span residues Asn229–Gln251, Pro272–Glu298, Lys359–Asn403, and Thr422–Leu463. Low complexity-rich tracts occupy residues Leu285 to Glu298, Asn364 to Lys401, and Thr422 to Ser432. The span at Lys448–His459 shows a compositional bias: basic residues. The short motif at Lys464–Lys480 is the Nuclear localization signal element. The interval Ala495 to Lys512 is calmodulin binding. Over residues Ser514–Ile529 the composition is skewed to polar residues. The disordered stretch occupies residues Ser514 to Glu587. Over residues Tyr536–Glu587 the composition is skewed to acidic residues. Positions Asp537 to Asp588 are DEED region. Calmodulin binding regions lie at residues Val589–Lys606 and Lys596–His613. Disordered regions lie at residues His613–Arg639 and Leu660–Ile700. The segment covering Leu668–Thr691 has biased composition (polar residues).

In terms of assembly, interacts with calmodulin and CBPD1 in the presence of Ca(2+).

It is found in the nucleus. This chain is Nucleomorphin (numA), found in Dictyostelium discoideum (Social amoeba).